We begin with the raw amino-acid sequence, 144 residues long: Maximins 8/H7 (144 aa).

The signal sequence occupies residues 1–18 (MKFKYIVAVSFLIASAYA). Positions 19–43 (RSEENDEQSLSQRDVLEEESLREIR) are excised as a propeptide. Asn-70 carries the asparagine amide modification. Positions 74-123 (TAEDHEVMKRLEAVMRDLDSLDYPEEASERETRGFNQEEIANLFTKKEKR) are excised as a propeptide. Leu-143 bears the Leucine amide mark.

Belongs to the bombinin family. Expressed by the skin glands.

The protein localises to the secreted. Maximin-8 shows antimicrobial activity against bacteria and against the fungus C.albicans. It has little hemolytic activity. Functionally, maximin-H7 shows antimicrobial activity against bacteria and against the fungus C.albicans. Shows strong hemolytic activity. The polypeptide is Maximins 8/H7 (Bombina maxima (Giant fire-bellied toad)).